Consider the following 384-residue polypeptide: DNA repair protein RAD51 homolog 2 (384 aa).

Residues 1–75 are interaction with RAD51C; it reads MGSKKLKRVG…TAYGIKAQRS (75 aa). 108–115 is an ATP binding site; it reads GPPGCGKT.

It belongs to the RecA family. RAD51 subfamily. Part of the BCDX2 complex consisting of RAD51B, RAD51C, RAD51D and XRCC2; the complex has a ring-like structure arranged into a flat disc around a central channel. The BCDX2 subcomplex RAD51B:RAD51C interacts with RAD51. Interacts with SWSAP1; involved in homologous recombination repair. Interacts with HELQ. In terms of processing, phosphorylated on tyrosine residues by BCR-ABL. Expressed in a wide range of tissues.

The protein localises to the nucleus. In terms of biological role, involved in the homologous recombination repair (HRR) pathway of double-stranded DNA breaks arising during DNA replication or induced by DNA-damaging agents. May promote the assembly of presynaptic RAD51 nucleoprotein filaments. Binds single-stranded DNA and double-stranded DNA and has DNA-dependent ATPase activity. Part of the RAD51 paralog protein complex BCDX2 which acts in the BRCA1-BRCA2-dependent HR pathway. Upon DNA damage, BCDX2 acts downstream of BRCA2 recruitment and upstream of RAD51 recruitment. BCDX2 binds predominantly to the intersection of the four duplex arms of the Holliday junction and to junction of replication forks. The BCDX2 complex was originally reported to bind single-stranded DNA, single-stranded gaps in duplex DNA and specifically to nicks in duplex DNA. The BCDX2 subcomplex RAD51B:RAD51C exhibits single-stranded DNA-dependent ATPase activity suggesting an involvement in early stages of the HR pathway. This Homo sapiens (Human) protein is DNA repair protein RAD51 homolog 2 (RAD51B).